Here is a 143-residue protein sequence, read N- to C-terminus: Large ribosomal subunit protein uL11 (143 aa).

The protein belongs to the universal ribosomal protein uL11 family. In terms of assembly, part of the ribosomal stalk of the 50S ribosomal subunit. Interacts with L10 and the large rRNA to form the base of the stalk. L10 forms an elongated spine to which L12 dimers bind in a sequential fashion forming a multimeric L10(L12)X complex. One or more lysine residues are methylated.

Forms part of the ribosomal stalk which helps the ribosome interact with GTP-bound translation factors. This is Large ribosomal subunit protein uL11 from Psychrobacter sp. (strain PRwf-1).